Here is a 180-residue protein sequence, read N- to C-terminus: Small ribosomal subunit protein bS21c (180 aa).

Residues 1-79 constitute a chloroplast transit peptide; sequence MASTSSLLNF…PSLAFSNTLY (79 aa). Positions 14–45 are enriched in low complexity; it reads LFPSNTSLPPSSNPKFPNPNSLSSQQNSISIS. Disordered stretches follow at residues 14–49 and 124–180; these read LFPS…SKKH and NKQE…GAPF. A compositionally biased stretch (basic residues) spans 130–147; sequence KRKHREAAKRNSRRRRGP. A compositionally biased stretch (basic and acidic residues) spans 154–166; the sequence is GKEEATKVDKKED.

Component of the chloroplast small ribosomal subunit (SSU). Mature 70S chloroplast ribosomes of higher plants consist of a small (30S) and a large (50S) subunit. The 30S small subunit contains 1 molecule of ribosomal RNA (16S rRNA) and 24 different proteins. The 50S large subunit contains 3 rRNA molecules (23S, 5S and 4.5S rRNA) and 33 different proteins. bS21c binds directly to 16S ribosomal RNA.

It localises to the plastid. It is found in the chloroplast. Functionally, component of the chloroplast ribosome (chloro-ribosome), a dedicated translation machinery responsible for the synthesis of chloroplast genome-encoded proteins, including proteins of the transcription and translation machinery and components of the photosynthetic apparatus. The sequence is that of Small ribosomal subunit protein bS21c (rps21) from Spinacia oleracea (Spinach).